Here is a 187-residue protein sequence, read N- to C-terminus: Elongation factor P (187 aa).

Belongs to the elongation factor P family.

The protein localises to the cytoplasm. Its pathway is protein biosynthesis; polypeptide chain elongation. Functionally, involved in peptide bond synthesis. Stimulates efficient translation and peptide-bond synthesis on native or reconstituted 70S ribosomes in vitro. Probably functions indirectly by altering the affinity of the ribosome for aminoacyl-tRNA, thus increasing their reactivity as acceptors for peptidyl transferase. The polypeptide is Elongation factor P (Rhodospirillum rubrum (strain ATCC 11170 / ATH 1.1.1 / DSM 467 / LMG 4362 / NCIMB 8255 / S1)).